Reading from the N-terminus, the 739-residue chain is NAD(P)H-quinone oxidoreductase subunit 5, chloroplastic (739 aa).

16 helical membrane passes run 9–29 (WVIP…LILI), 39–59 (IWAF…VQLS), 89–109 (IDPL…LVLI), 125–145 (FVYI…SNLI), 147–167 (IYFF…FWFT), 185–205 (GDFG…SLEF), 219–239 (NGIN…GAVA), 258–278 (TPIS…FLLA), 280–300 (LLPL…VGTI), 327–347 (LGYM…FHLI), 354–374 (ALLF…VGYS), 396–416 (TTFL…CFWS), 425–445 (WLYS…TAFY), 542–562 (LFPL…GISF), 610–630 (TLAI…YSFF), and 719–739 (ISSY…FFLS).

Belongs to the complex I subunit 5 family. In terms of assembly, NDH is composed of at least 16 different subunits, 5 of which are encoded in the nucleus.

The protein localises to the plastid. It is found in the chloroplast thylakoid membrane. The enzyme catalyses a plastoquinone + NADH + (n+1) H(+)(in) = a plastoquinol + NAD(+) + n H(+)(out). It catalyses the reaction a plastoquinone + NADPH + (n+1) H(+)(in) = a plastoquinol + NADP(+) + n H(+)(out). In terms of biological role, NDH shuttles electrons from NAD(P)H:plastoquinone, via FMN and iron-sulfur (Fe-S) centers, to quinones in the photosynthetic chain and possibly in a chloroplast respiratory chain. The immediate electron acceptor for the enzyme in this species is believed to be plastoquinone. Couples the redox reaction to proton translocation, and thus conserves the redox energy in a proton gradient. The polypeptide is NAD(P)H-quinone oxidoreductase subunit 5, chloroplastic (ndhF) (Hordeum vulgare (Barley)).